The chain runs to 478 residues: Cytochrome c-552 (478 aa).

Positions 1-26 are cleaved as a signal peptide; sequence MTRIKINARRIFSLLIPFFFFTSVHA. Histidine 94 serves as a coordination point for heme c. Cysteine 122, cysteine 125, and lysine 126 together coordinate heme. 6 residues coordinate heme c: cysteine 160, cysteine 163, histidine 164, cysteine 209, cysteine 212, and histidine 213. Positions 215, 216, 261, and 263 each coordinate Ca(2+). Tyrosine 216 contacts substrate. Histidine 264 is a binding site for substrate. Histidine 275, cysteine 282, cysteine 285, histidine 286, histidine 301, cysteine 314, cysteine 317, histidine 318, and histidine 393 together coordinate heme c.

This sequence belongs to the cytochrome c-552 family. The cofactor is Ca(2+). Heme c is required as a cofactor.

The protein localises to the periplasm. The enzyme catalyses 6 Fe(III)-[cytochrome c] + NH4(+) + 2 H2O = 6 Fe(II)-[cytochrome c] + nitrite + 8 H(+). It participates in nitrogen metabolism; nitrate reduction (assimilation). Catalyzes the reduction of nitrite to ammonia, consuming six electrons in the process. The sequence is that of Cytochrome c-552 from Escherichia coli O6:H1 (strain CFT073 / ATCC 700928 / UPEC).